The chain runs to 131 residues: Small ribosomal subunit protein uS8 (131 aa).

It belongs to the universal ribosomal protein uS8 family. In terms of assembly, part of the 30S ribosomal subunit. Contacts proteins S5 and S12.

Functionally, one of the primary rRNA binding proteins, it binds directly to 16S rRNA central domain where it helps coordinate assembly of the platform of the 30S subunit. The sequence is that of Small ribosomal subunit protein uS8 from Polaromonas sp. (strain JS666 / ATCC BAA-500).